Consider the following 545-residue polypeptide: Resolvase homolog YokA (545 aa).

A Resolvase/invertase-type recombinase catalytic domain is found at 14 to 165 (NILGYLRRSR…GAKYTYAAQG (152 aa)). Residues 19-46 (LRRSRQDMEREKRTGEDTLTEQKELMNK) adopt a coiled-coil conformation. The active-site O-(5'-phospho-DNA)-serine intermediate is Ser-22. Residues 173–303 (PYGYQLNKKT…VKIANKVPLL (131 aa)) constitute a DNA-binding region (recombinase). A coiled-coil region spans residues 402-475 (NMKTKKQMSE…QDTQSEIDSN (74 aa)).

In the N-terminal section; belongs to the site-specific recombinase resolvase family.

In Bacillus subtilis (strain 168), this protein is Resolvase homolog YokA (yokA).